We begin with the raw amino-acid sequence, 312 residues long: Malate dehydrogenase (312 aa).

Residues 7–13 (GAAGGIG) and Asp34 contribute to the NAD(+) site. Arg81 and Arg87 together coordinate substrate. Residues Asn94 and 117–119 (ITN) each bind NAD(+). 2 residues coordinate substrate: Asn119 and Arg153. The active-site Proton acceptor is the His177. Met227 is a binding site for NAD(+).

The protein belongs to the LDH/MDH superfamily. MDH type 1 family. Homodimer.

The enzyme catalyses (S)-malate + NAD(+) = oxaloacetate + NADH + H(+). Catalyzes the reversible oxidation of malate to oxaloacetate. This is Malate dehydrogenase from Escherichia coli (strain SE11).